The following is a 441-amino-acid chain: Protein FAM83A (441 aa).

Disordered regions lie at residues 81–108 (SNDN…MNSD) and 312–368 (GMSI…SPLQ). The segment covering 314–327 (SIMSDSNPESINTT) has biased composition (polar residues). A compositionally biased stretch (low complexity) spans 328 to 354 (SEPFSSISTASISNDSQRPKSPVSTTP).

This sequence belongs to the FAM83 family.

It localises to the cytoplasm. May function in the epidermal growth factor receptor/EGFR signaling pathway. In Xenopus tropicalis (Western clawed frog), this protein is Protein FAM83A.